Here is a 109-residue protein sequence, read N- to C-terminus: Flagellar hook-basal body complex protein FliE (109 aa).

This sequence belongs to the FliE family.

It is found in the bacterial flagellum basal body. The polypeptide is Flagellar hook-basal body complex protein FliE (Pseudomonas aeruginosa (strain LESB58)).